The primary structure comprises 865 residues: Probable beta-glucosidase J (865 aa).

Aspartate 233 is a catalytic residue. Residues asparagine 330, asparagine 447, asparagine 503, and asparagine 764 are each glycosylated (N-linked (GlcNAc...) asparagine). One can recognise a PA14 domain in the interval 411 to 579 (TGQPGYTFRV…DTDTAIQQAV (169 aa)).

This sequence belongs to the glycosyl hydrolase 3 family.

It localises to the secreted. It catalyses the reaction Hydrolysis of terminal, non-reducing beta-D-glucosyl residues with release of beta-D-glucose.. Its pathway is glycan metabolism; cellulose degradation. Beta-glucosidases are one of a number of cellulolytic enzymes involved in the degradation of cellulosic biomass. Catalyzes the last step releasing glucose from the inhibitory cellobiose. The sequence is that of Probable beta-glucosidase J (bglJ) from Aspergillus fumigatus (strain ATCC MYA-4609 / CBS 101355 / FGSC A1100 / Af293) (Neosartorya fumigata).